The sequence spans 181 residues: Ribulose bisphosphate carboxylase small subunit, chloroplastic 1 (181 aa).

The N-terminal 57 residues, 1–57 (MASSIVSSAAAATRSNVAQASMVAPFTGLKSAASFPVTKKNNNVDITSLASNGGRVR), are a transit peptide targeting the chloroplast.

It belongs to the RuBisCO small chain family. (Microbial infection) Binds to tobamovirus movement protein; this interaction seems required for viral systemic movement. As to quaternary structure, heterohexadecamer of 8 large and 8 small subunits.

It localises to the plastid. The protein resides in the chloroplast. Its subcellular location is the cell junction. It is found in the plasmodesma. In terms of biological role, ruBisCO catalyzes two reactions: the carboxylation of D-ribulose 1,5-bisphosphate, the primary event in carbon dioxide fixation, as well as the oxidative fragmentation of the pentose substrate. Both reactions occur simultaneously and in competition at the same active site. Although the small subunit is not catalytic it is essential for maximal activity. Involved in antiviral defenses. This chain is Ribulose bisphosphate carboxylase small subunit, chloroplastic 1, found in Solanum lycopersicum (Tomato).